Reading from the N-terminus, the 160-residue chain is Phosphopantetheine adenylyltransferase (160 aa).

Ser9 contacts substrate. Residues 9–10 (SF) and His17 contribute to the ATP site. Lys41, Ile73, and Lys87 together coordinate substrate. Residues 88 to 90 (GLR), Glu98, and 122 to 128 (YSFVSSS) each bind ATP.

This sequence belongs to the bacterial CoaD family. As to quaternary structure, homohexamer. Mg(2+) serves as cofactor.

The protein localises to the cytoplasm. It catalyses the reaction (R)-4'-phosphopantetheine + ATP + H(+) = 3'-dephospho-CoA + diphosphate. It participates in cofactor biosynthesis; coenzyme A biosynthesis; CoA from (R)-pantothenate: step 4/5. Reversibly transfers an adenylyl group from ATP to 4'-phosphopantetheine, yielding dephospho-CoA (dPCoA) and pyrophosphate. The sequence is that of Phosphopantetheine adenylyltransferase from Mycolicibacterium vanbaalenii (strain DSM 7251 / JCM 13017 / BCRC 16820 / KCTC 9966 / NRRL B-24157 / PYR-1) (Mycobacterium vanbaalenii).